The following is a 132-amino-acid chain: Histone H2A.2 (132 aa).

An N-acetylserine modification is found at Ser2. 2 positions are modified to N6-acetyllysine: Lys5 and Lys8. N6-succinyllysine is present on residues Lys14 and Lys22. Residue Gln106 is modified to N5-methylglutamine. Residue Lys120 is modified to N6-malonyllysine. Residue Lys127 forms a Glycyl lysine isopeptide (Lys-Gly) (interchain with G-Cter in SUMO) linkage. Residue Ser129 is modified to Phosphoserine. The [ST]-Q motif motif lies at Ser129 to Gln130.

It belongs to the histone H2A family. In terms of assembly, the nucleosome is a histone octamer containing two molecules each of H2A, H2B, H3 and H4 assembled in one H3-H4 heterotetramer and two H2A-H2B heterodimers. The octamer wraps approximately 147 bp of DNA. Interacts with NAP1. Post-translationally, phosphorylated to form H2AS128ph (gamma-H2A) in response to DNA double-strand breaks (DSBs) generated by exogenous genotoxic agents and by stalled replication forks. Phosphorylation is dependent on the DNA damage checkpoint kinases MEC1/ATR and TEL1/ATM, spreads on either side of a detected DSB site and may mark the surrounding chromatin for recruitment of proteins required for DNA damage signaling and repair. Gamma-H2A interacts with ARP4, a shared component of the NuA4 histone acetyltransferase complex and the INO80 and SWR1 chromatin remodeling complexes, and serves to recruit first NuA4, mediating histone H4 acetylation, and subsequently the INO80/SWR1 complexes, facilitating DNA resection, to DSB sites. Gamma-H2A is required for sequestering cohesin around the break site, which is important for efficient post-replicative double-strand break repair by homologous recombination, holding the damaged chromatid close to its undamaged sister template. Gamma-H2A is removed from the DNA prior to the strand invasion-primer extension step of the repair process and subsequently dephosphorylated by PPH3, a component of the histone H2A phosphatase complex (HTP-C). Dephosphorylation is necessary for efficient recovery from the DNA damage checkpoint. In terms of processing, N-acetylated by NAT4. Acetylated by ESA1, a component of the NuA4 histone acetyltransferase (HAT) complex, to form H2AK4ac and H2AK7ac. Post-translationally, glutamine methylation at Gln-106 (H2AQ105me) by NOP1 is specifically dedicated to polymerase I. It is present at 35S ribosomal DNA locus and impairs binding of the FACT complex. In terms of processing, sumoylated to from H2AK126su. May lead to transcriptional repression.

It localises to the nucleus. Its subcellular location is the chromosome. Its function is as follows. Core component of nucleosome which plays a central role in DNA double strand break (DSB) repair. Nucleosomes wrap and compact DNA into chromatin, limiting DNA accessibility to the cellular machineries which require DNA as a template. Histones thereby play a central role in transcription regulation, DNA repair, DNA replication and chromosomal stability. DNA accessibility is regulated via a complex set of post-translational modifications of histones, also called histone code, and nucleosome remodeling. This is Histone H2A.2 (HTA2) from Saccharomyces cerevisiae (strain ATCC 204508 / S288c) (Baker's yeast).